The sequence spans 276 residues: 4-hydroxy-3-methylbut-2-enyl diphosphate reductase (276 aa).

[4Fe-4S] cluster is bound at residue cysteine 12. Positions 36 and 71 each coordinate (2E)-4-hydroxy-3-methylbut-2-enyl diphosphate. Dimethylallyl diphosphate is bound by residues histidine 36 and histidine 71. Isopentenyl diphosphate-binding residues include histidine 36 and histidine 71. Position 93 (cysteine 93) interacts with [4Fe-4S] cluster. Residue histidine 121 coordinates (2E)-4-hydroxy-3-methylbut-2-enyl diphosphate. Histidine 121 provides a ligand contact to dimethylallyl diphosphate. Isopentenyl diphosphate is bound at residue histidine 121. Catalysis depends on glutamate 123, which acts as the Proton donor. A (2E)-4-hydroxy-3-methylbut-2-enyl diphosphate-binding site is contributed by threonine 160. Residue cysteine 188 coordinates [4Fe-4S] cluster. The (2E)-4-hydroxy-3-methylbut-2-enyl diphosphate site is built by serine 216, serine 217, asparagine 218, and serine 259. Dimethylallyl diphosphate-binding residues include serine 216, serine 217, asparagine 218, and serine 259. Serine 216, serine 217, asparagine 218, and serine 259 together coordinate isopentenyl diphosphate.

This sequence belongs to the IspH family. [4Fe-4S] cluster is required as a cofactor.

It catalyses the reaction isopentenyl diphosphate + 2 oxidized [2Fe-2S]-[ferredoxin] + H2O = (2E)-4-hydroxy-3-methylbut-2-enyl diphosphate + 2 reduced [2Fe-2S]-[ferredoxin] + 2 H(+). The catalysed reaction is dimethylallyl diphosphate + 2 oxidized [2Fe-2S]-[ferredoxin] + H2O = (2E)-4-hydroxy-3-methylbut-2-enyl diphosphate + 2 reduced [2Fe-2S]-[ferredoxin] + 2 H(+). It functions in the pathway isoprenoid biosynthesis; dimethylallyl diphosphate biosynthesis; dimethylallyl diphosphate from (2E)-4-hydroxy-3-methylbutenyl diphosphate: step 1/1. Its pathway is isoprenoid biosynthesis; isopentenyl diphosphate biosynthesis via DXP pathway; isopentenyl diphosphate from 1-deoxy-D-xylulose 5-phosphate: step 6/6. In terms of biological role, catalyzes the conversion of 1-hydroxy-2-methyl-2-(E)-butenyl 4-diphosphate (HMBPP) into a mixture of isopentenyl diphosphate (IPP) and dimethylallyl diphosphate (DMAPP). Acts in the terminal step of the DOXP/MEP pathway for isoprenoid precursor biosynthesis. The chain is 4-hydroxy-3-methylbut-2-enyl diphosphate reductase from Nautilia profundicola (strain ATCC BAA-1463 / DSM 18972 / AmH).